The chain runs to 357 residues: Uroporphyrinogen decarboxylase (357 aa).

Residues 27 to 31 (RQAGR), D77, Y154, T209, and H327 contribute to the substrate site.

This sequence belongs to the uroporphyrinogen decarboxylase family. Homodimer.

Its subcellular location is the cytoplasm. It catalyses the reaction uroporphyrinogen III + 4 H(+) = coproporphyrinogen III + 4 CO2. Its pathway is porphyrin-containing compound metabolism; protoporphyrin-IX biosynthesis; coproporphyrinogen-III from 5-aminolevulinate: step 4/4. Functionally, catalyzes the decarboxylation of four acetate groups of uroporphyrinogen-III to yield coproporphyrinogen-III. The chain is Uroporphyrinogen decarboxylase from Nitrosococcus oceani (strain ATCC 19707 / BCRC 17464 / JCM 30415 / NCIMB 11848 / C-107).